The primary structure comprises 415 residues: Transcriptional regulator fogI (415 aa).

Residues 12–39 constitute a DNA-binding region (zn(2)-C6 fungal-type); that stretch reads CNACNESKVRCSQTKPTCARCERNKTTC. Residues 50-153 form a disordered region; sequence DAPPISLSHS…ILSPANLDLP (104 aa). Composition is skewed to low complexity over residues 80–102 and 123–135; these read VHIPNATATANATTTANYTSTTT and QFFAQQQPHHQQP.

It localises to the nucleus. Functionally, transcriptional regulator that postively regulates the expression of the gene cluster that mediates the biosynthesis of flavoglaucin and congeners (including aspergin, dihydroauroglaucin and auroglaucin), prenylated salicylaldehyde derivatives carrying a saturated or an unsaturated C-7 side chain. The sequence is that of Transcriptional regulator fogI from Aspergillus ruber (strain CBS 135680).